Here is a 126-residue protein sequence, read N- to C-terminus: Small ribosomal subunit protein uS12 (126 aa).

3-methylthioaspartic acid is present on Asp-89.

Belongs to the universal ribosomal protein uS12 family. As to quaternary structure, part of the 30S ribosomal subunit. Contacts proteins S8 and S17. May interact with IF1 in the 30S initiation complex.

Its function is as follows. With S4 and S5 plays an important role in translational accuracy. In terms of biological role, interacts with and stabilizes bases of the 16S rRNA that are involved in tRNA selection in the A site and with the mRNA backbone. Located at the interface of the 30S and 50S subunits, it traverses the body of the 30S subunit contacting proteins on the other side and probably holding the rRNA structure together. The combined cluster of proteins S8, S12 and S17 appears to hold together the shoulder and platform of the 30S subunit. This is Small ribosomal subunit protein uS12 from Carboxydothermus hydrogenoformans (strain ATCC BAA-161 / DSM 6008 / Z-2901).